Consider the following 103-residue polypeptide: Toluene-4-monooxygenase system, effector component (103 aa).

Belongs to the TmoD/XamoD family. In terms of assembly, the alkene monooxygenase multicomponent enzyme system is composed of an electron transfer component and a monooxygenase component interacting with the effector protein TmoD. The electron transfer component is composed of a ferredoxin reductase (TmoF) and a ferredoxin (TmoC), and the monooxygenase component is formed by a heterohexamer (dimer of heterotrimers) of two alpha subunits (TmoA), two beta subunits (TmoE) and two gamma subunits (TmoB).

It participates in xenobiotic degradation; toluene degradation. Functionally, effector component of the toluene-4-monooxygenase multicomponent enzyme system which catalyzes the O2- and NADH-dependent hydroxylation of toluene to form p-cresol. Required for optimal efficiency and specificity of the holoenzyme. The protein is Toluene-4-monooxygenase system, effector component of Ectopseudomonas mendocina (Pseudomonas mendocina).